Here is a 392-residue protein sequence, read N- to C-terminus: Putative F-box protein At1g71320 (392 aa).

Residues 8–55 form the F-box domain; the sequence is NPKTIFIPDDIAEGIFHHLPIKSLARFKVLSKKWTSMIESTYFSHKRL.

The polypeptide is Putative F-box protein At1g71320 (Arabidopsis thaliana (Mouse-ear cress)).